The sequence spans 86 residues: DNA-directed RNA polymerase subunit omega (86 aa).

The protein belongs to the RNA polymerase subunit omega family. As to quaternary structure, the RNAP catalytic core consists of 2 alpha, 1 beta, 1 beta' and 1 omega subunit. When a sigma factor is associated with the core the holoenzyme is formed, which can initiate transcription.

It carries out the reaction RNA(n) + a ribonucleoside 5'-triphosphate = RNA(n+1) + diphosphate. Promotes RNA polymerase assembly. Latches the N- and C-terminal regions of the beta' subunit thereby facilitating its interaction with the beta and alpha subunits. This Agathobacter rectalis (strain ATCC 33656 / DSM 3377 / JCM 17463 / KCTC 5835 / VPI 0990) (Eubacterium rectale) protein is DNA-directed RNA polymerase subunit omega.